The primary structure comprises 731 residues: Vezatin (731 aa).

The next 2 membrane-spanning stretches (helical) occupy residues 91–111 (LATPNIWDLSMLFAFISLLVM) and 114–134 (TWWIVSSWLVWGVILFVYLVI). Residues 382–414 (VRSLQLHLKALLNEVIILEDELEKLVCTKETQE) adopt a coiled-coil conformation. 2 disordered regions span residues 570 to 671 (PVDP…DSLQ) and 710 to 731 (QTFGDEEEEQIIEENKNKIEEK). Over residues 577-586 (ISNSEPSMNS) the composition is skewed to polar residues. The segment covering 590-601 (KVSKNDTEEESS) has biased composition (basic and acidic residues). The segment covering 658 to 671 (GLTTAPPTPRDSLQ) has biased composition (polar residues). Positions 712–721 (FGDEEEEQII) are enriched in acidic residues. Residues 722–731 (EENKNKIEEK) are compositionally biased toward basic and acidic residues.

Belongs to the vezatin family. As to quaternary structure, interacts with USH2A (via the cytoplasmic region); the interaction associates VEZT with the USH2 complex at the stereocilia base. Interacts with myosin MYO7A and the cadherin-catenins complex.

It is found in the cell membrane. Its subcellular location is the cell projection. The protein resides in the stereocilium membrane. It localises to the cell junction. The protein localises to the adherens junction. It is found in the nucleus. Its subcellular location is the cytoplasmic vesicle. The protein resides in the secretory vesicle. It localises to the acrosome. Functionally, plays a pivotal role in the establishment of adherens junctions and their maintenance in adult life. Required for morphogenesis of the preimplantation embryo, and for the implantation process. This is Vezatin (VEZT) from Pongo abelii (Sumatran orangutan).